A 258-amino-acid chain; its full sequence is Acetylglutamate kinase (258 aa).

Residues 41 to 42 (GG), R63, and N156 each bind substrate.

It belongs to the acetylglutamate kinase family. ArgB subfamily.

The protein resides in the cytoplasm. The enzyme catalyses N-acetyl-L-glutamate + ATP = N-acetyl-L-glutamyl 5-phosphate + ADP. Its pathway is amino-acid biosynthesis; L-arginine biosynthesis; N(2)-acetyl-L-ornithine from L-glutamate: step 2/4. Catalyzes the ATP-dependent phosphorylation of N-acetyl-L-glutamate. In Geobacillus kaustophilus (strain HTA426), this protein is Acetylglutamate kinase.